Reading from the N-terminus, the 102-residue chain is Small ribosomal subunit protein uS10 (102 aa).

This sequence belongs to the universal ribosomal protein uS10 family. As to quaternary structure, part of the 30S ribosomal subunit.

Functionally, involved in the binding of tRNA to the ribosomes. The polypeptide is Small ribosomal subunit protein uS10 (Leifsonia xyli subsp. xyli (strain CTCB07)).